The primary structure comprises 740 residues: N-acetylated-alpha-linked acidic dipeptidase 2 (740 aa).

Residues 1–7 (MARPRHL) are Cytoplasmic-facing. The helical; Signal-anchor for type II membrane protein transmembrane segment at 8-31 (RGLGMCITAVLASFIAGFTVGWFI) threads the bilayer. Topologically, residues 32–740 (KPLKETTTSA…AAAGTLTNVL (709 aa)) are extracellular. N-linked (GlcNAc...) asparagine glycans are attached at residues Asn-111, Asn-143, and Asn-185. Substrate-binding residues include Arg-200 and Asn-247. Residues Thr-259 and Tyr-262 each contribute to the Ca(2+) site. The interval 264–577 (AKEYTFRLPV…QLRGALVYEL (314 aa)) is NAALADase. N-linked (GlcNAc...) asparagine glycosylation occurs at Asn-314. 2 residues coordinate Zn(2+): His-367 and Asp-377. Glu-414 contributes to the substrate binding site. Residue Glu-414 is the Nucleophile; for NAALADase activity of the active site. Glu-415 contributes to the Zn(2+) binding site. Glu-423 and Glu-426 together coordinate Ca(2+). Zn(2+) is bound at residue Asp-443. Asn-449 carries N-linked (GlcNAc...) asparagine glycosylation. Substrate is bound by residues 507–508 (SG), 524–526 (RAR), Tyr-542, and 542–543 (YH). A Zn(2+)-binding site is contributed by His-543. Residue Asn-603 is glycosylated (N-linked (GlcNAc...) asparagine). Catalysis depends on Ser-618, which acts as the Charge relay system. The N-linked (GlcNAc...) asparagine glycan is linked to Asn-628. Catalysis depends on charge relay system residues Asp-656 and His-679. 689–690 (KY) lines the substrate pocket.

Belongs to the peptidase M28 family. M28B subfamily. Homodimer. Requires Zn(2+) as cofactor. Expressed ovary, testes and lung, but not brain.

The protein localises to the cell membrane. The enzyme catalyses Release of an unsubstituted, C-terminal glutamyl residue, typically from Ac-Asp-Glu or folylpoly-gamma-glutamates.. Functionally, has N-acetylated-alpha-linked-acidic dipeptidase (NAALADase) activity. Also exhibits a dipeptidyl-peptidase IV type activity. Inactivates the peptide neurotransmitter N-acetylaspartylglutamate. This is N-acetylated-alpha-linked acidic dipeptidase 2 (Naalad2) from Mus musculus (Mouse).